The primary structure comprises 213 residues: Leucyl/phenylalanyl-tRNA--protein transferase (213 aa).

It belongs to the L/F-transferase family.

Its subcellular location is the cytoplasm. The enzyme catalyses N-terminal L-lysyl-[protein] + L-leucyl-tRNA(Leu) = N-terminal L-leucyl-L-lysyl-[protein] + tRNA(Leu) + H(+). It carries out the reaction N-terminal L-arginyl-[protein] + L-leucyl-tRNA(Leu) = N-terminal L-leucyl-L-arginyl-[protein] + tRNA(Leu) + H(+). The catalysed reaction is L-phenylalanyl-tRNA(Phe) + an N-terminal L-alpha-aminoacyl-[protein] = an N-terminal L-phenylalanyl-L-alpha-aminoacyl-[protein] + tRNA(Phe). In terms of biological role, functions in the N-end rule pathway of protein degradation where it conjugates Leu, Phe and, less efficiently, Met from aminoacyl-tRNAs to the N-termini of proteins containing an N-terminal arginine or lysine. The protein is Leucyl/phenylalanyl-tRNA--protein transferase of Rhodospirillum rubrum (strain ATCC 11170 / ATH 1.1.1 / DSM 467 / LMG 4362 / NCIMB 8255 / S1).